Reading from the N-terminus, the 338-residue chain is Lipoate-protein ligase A (338 aa).

The region spanning 29-216 (PATQRVLFLW…AFFAHYGERV (188 aa)) is the BPL/LPL catalytic domain. Residues Arg71, 76–79 (GAVF), and Lys134 each bind ATP. Lys134 is a binding site for (R)-lipoate.

The protein belongs to the LplA family. In terms of assembly, monomer.

It is found in the cytoplasm. It carries out the reaction L-lysyl-[lipoyl-carrier protein] + (R)-lipoate + ATP = N(6)-[(R)-lipoyl]-L-lysyl-[lipoyl-carrier protein] + AMP + diphosphate + H(+). It participates in protein modification; protein lipoylation via exogenous pathway; protein N(6)-(lipoyl)lysine from lipoate: step 1/2. The protein operates within protein modification; protein lipoylation via exogenous pathway; protein N(6)-(lipoyl)lysine from lipoate: step 2/2. Functionally, catalyzes both the ATP-dependent activation of exogenously supplied lipoate to lipoyl-AMP and the transfer of the activated lipoyl onto the lipoyl domains of lipoate-dependent enzymes. The protein is Lipoate-protein ligase A of Escherichia coli O139:H28 (strain E24377A / ETEC).